An 87-amino-acid chain; its full sequence is UPF0250 protein plu1293 (87 aa).

It belongs to the UPF0250 family.

The chain is UPF0250 protein plu1293 from Photorhabdus laumondii subsp. laumondii (strain DSM 15139 / CIP 105565 / TT01) (Photorhabdus luminescens subsp. laumondii).